We begin with the raw amino-acid sequence, 763 residues long: Thyrotropin receptor (763 aa).

The signal sequence occupies residues 1–21 (MRPTPLLRLALFLVLPSSLGG). Topologically, residues 22–412 (ERCPSPPCEC…EFNPCEDIMG (391 aa)) are extracellular. The cysteines at positions 31 and 41 are disulfide-linked. Residues 51-74 (PPSTQTLKFIETHLKTIPSRAFSN) form an LRR 1 repeat. Residues Asn77 and Asn99 are each glycosylated (N-linked (GlcNAc...) asparagine). LRR repeat units lie at residues 125–150 (LPLL…IYST), 151–174 (DVFF…AFQG), 176–199 (CNET…AFNG), 201–223 (KLDA…AFAG), and 225–248 (YSGP…GLEH). N-linked (GlcNAc...) asparagine glycosylation is found at Asn177 and Asn198. Asn302 carries an N-linked (GlcNAc...) asparagine glycan. Sulfotyrosine is present on Tyr384. A helical transmembrane segment spans residues 413–440 (YKFLRIVVWFVSLLALLGNVFVLVILLT). Topologically, residues 441 to 449 (SHYKLTVPR) are cytoplasmic. A helical transmembrane segment spans residues 450-472 (FLMCNLAFADFCMGLYLLLIASV). The Extracellular portion of the chain corresponds to 473-493 (DLYTQSEYYNHAIDWQTGPGC). Cys493 and Cys568 are disulfide-bonded. Residues 494 to 516 (NTAGFFTVFASELSVYTLTVITL) traverse the membrane as a helical segment. Residues 517 to 536 (ERWHAITFAMRLDRKIRLWH) lie on the Cytoplasmic side of the membrane. A helical transmembrane segment spans residues 537 to 559 (AYVIMLGGWVCCFLLALLPLVGI). At 560–579 (SSYAKVSICLPMDTETPLAL) the chain is on the extracellular side. Residues 580–601 (AYIILVLLLNIIAFIIVCACYV) form a helical membrane-spanning segment. The Cytoplasmic segment spans residues 602 to 624 (KIYITVRNPHYNPGDKDTRIAKR). The chain crosses the membrane as a helical span at residues 625 to 648 (MAVLIFTDFMCMAPISFYALSALM). Over 649–659 (NKPLITVTNSK) the chain is Extracellular. Residues 660-681 (ILLVLFYPLNSCANPFLYAIFT) traverse the membrane as a helical segment. At 682 to 763 (KAFQRDVFML…TSKEYKRTVL (82 aa)) the chain is on the cytoplasmic side. A disordered region spans residues 742 to 763 (ENSHLTPKQQDQTSKEYKRTVL). The segment covering 744-753 (SHLTPKQQDQ) has biased composition (polar residues). Residues 754–763 (TSKEYKRTVL) show a composition bias toward basic and acidic residues. The PDZ-binding motif lies at 761 to 763 (TVL).

The protein belongs to the G-protein coupled receptor 1 family. FSH/LSH/TSH subfamily. As to quaternary structure, interacts with heterodimer GPHA2:GPHB5; this interaction stimulates cAMP production. Interacts (via the PDZ-binding motif) with SCRIB; regulates TSHR trafficking and function. Post-translationally, glycosylated. Sulfated. Sulfation on Tyr-384 plays a role in thyrotropin receptor binding and activation.

Its subcellular location is the cell membrane. It is found in the basolateral cell membrane. In terms of biological role, receptor for the thyroid-stimulating hormone (TSH) or thyrotropin. Also acts as a receptor for the heterodimeric glycoprotein hormone (GPHA2:GPHB5) or thyrostimulin. The activity of this receptor is mediated by G proteins which activate adenylate cyclase. Plays a central role in controlling thyroid cell metabolism. This chain is Thyrotropin receptor (TSHR), found in Bos taurus (Bovine).